Here is a 157-residue protein sequence, read N- to C-terminus: 6,7-dimethyl-8-ribityllumazine synthase (157 aa).

Residues F22, 57–59 (AYE), and 81–83 (TVI) contribute to the 5-amino-6-(D-ribitylamino)uracil site. 86 to 87 (GT) is a binding site for (2S)-2-hydroxy-3-oxobutyl phosphate. Residue H89 is the Proton donor of the active site. F114 provides a ligand contact to 5-amino-6-(D-ribitylamino)uracil. Residue R128 coordinates (2S)-2-hydroxy-3-oxobutyl phosphate.

Belongs to the DMRL synthase family. In terms of assembly, forms an icosahedral capsid composed of 60 subunits, arranged as a dodecamer of pentamers.

It catalyses the reaction (2S)-2-hydroxy-3-oxobutyl phosphate + 5-amino-6-(D-ribitylamino)uracil = 6,7-dimethyl-8-(1-D-ribityl)lumazine + phosphate + 2 H2O + H(+). The protein operates within cofactor biosynthesis; riboflavin biosynthesis; riboflavin from 2-hydroxy-3-oxobutyl phosphate and 5-amino-6-(D-ribitylamino)uracil: step 1/2. In terms of biological role, catalyzes the formation of 6,7-dimethyl-8-ribityllumazine by condensation of 5-amino-6-(D-ribitylamino)uracil with 3,4-dihydroxy-2-butanone 4-phosphate. This is the penultimate step in the biosynthesis of riboflavin. The protein is 6,7-dimethyl-8-ribityllumazine synthase of Histophilus somni (strain 129Pt) (Haemophilus somnus).